The sequence spans 172 residues: MAEQKSSYGYEELLACARGEMFGPGNAQLPLPPMLMVHRITDISETGGEFDKGYIRAEYDVRPDDWYFPCHFMGNPIMPGCLGLDGMWQLTGFFLGWLGEPGRGMALSTGEVKFKGMVRPHTKLLEYGIDFKRVMRGRLVLGTADGWLKADGETIYRASDLRVGLSKDSEGQ.

His71 is a catalytic residue.

Belongs to the thioester dehydratase family. FabA subfamily. As to quaternary structure, homodimer.

It is found in the cytoplasm. It catalyses the reaction a (3R)-hydroxyacyl-[ACP] = a (2E)-enoyl-[ACP] + H2O. It carries out the reaction (3R)-hydroxydecanoyl-[ACP] = (2E)-decenoyl-[ACP] + H2O. The catalysed reaction is (2E)-decenoyl-[ACP] = (3Z)-decenoyl-[ACP]. Its pathway is lipid metabolism; fatty acid biosynthesis. Functionally, necessary for the introduction of cis unsaturation into fatty acids. Catalyzes the dehydration of (3R)-3-hydroxydecanoyl-ACP to E-(2)-decenoyl-ACP and then its isomerization to Z-(3)-decenoyl-ACP. Can catalyze the dehydratase reaction for beta-hydroxyacyl-ACPs with saturated chain lengths up to 16:0, being most active on intermediate chain length. The chain is 3-hydroxydecanoyl-[acyl-carrier-protein] dehydratase from Brucella anthropi (strain ATCC 49188 / DSM 6882 / CCUG 24695 / JCM 21032 / LMG 3331 / NBRC 15819 / NCTC 12168 / Alc 37) (Ochrobactrum anthropi).